A 495-amino-acid polypeptide reads, in one-letter code: MATFKDACFHYRRLTALNRRLCNIGANSIWMPVPDAKIKGWCLECCQIADLTHCYGCSLPHVCKWCVQNRRCFLDNEPHLLKLQQLKHPITKDKLQCIIDLYNIIFPINDKVIRKFERMIKQRECRNQYKIEWYNHKLLPITLNAAAFKFDENNLYYVFGLYEKSVSDIYAPYRIVNFINEFDKLLLDHINFTRMSNLPIELRAITQEYFQLSRLPSSKLKQIYFSDFTKETVIFNTYTKTPGRSIYRNVTEFNWRDELELYTDLKNDKNKLIAAMMTSKYTRFYAHDNNFGRLKMTIFELGHHCQPNYVASNHPGNASDIQYCKWCNIKYFLSKIDWRIRDMYNLLMEFIKDCYKSNVNVGHCSSVENIYPLIKRLIWSLFTNHMDQTIEEVFNHMSPVSVEGTNVIMLILGLNISLYNEIKRTLNVDSIPMVLNLNEFSSIVKSISSKWYNVDELDKLPMSIKSTEELIEMKNSGTLTEEFELLISNSEDDNE.

The RNA-binding stretch occupies residues Met1 to Leu81. Residues Cys42–His79 are zinc-binding domain. An important for cytoskeleton localization region spans residues Lys82–Asn177. Positions Asp320–Glu495 are interaction with host IRF3. The pLxIS motif signature appears at Leu485–Ser488.

The protein belongs to the rotavirus NSP1 family. Interacts (via C-terminus) with host IRF3; this interaction leads to IRF3 degradation. Interacts with host IRF7; this interaction leads to IRF7 degradation. Interacts with host CUL1 and CUL3.

The protein resides in the host cytoplasm. Its subcellular location is the host cytoskeleton. Its function is as follows. Plays a role in the inhibition of host innate immunity by inducing the degradation of key host factors required to activate interferon production such as IRF3, IRF5 or IRF7. Associates with components of cullin RING ligases (CRLs) including CUL1 or CUL3, which are essential multisubunit ubiquitination complexes, to modulate their activities. This chain is Non-structural protein 1, found in Macaca mulatta (Rhesus macaque).